The following is a 115-amino-acid chain: Large ribosomal subunit protein bL19 (115 aa).

This sequence belongs to the bacterial ribosomal protein bL19 family.

Its function is as follows. This protein is located at the 30S-50S ribosomal subunit interface and may play a role in the structure and function of the aminoacyl-tRNA binding site. In Buchnera aphidicola subsp. Schizaphis graminum (strain Sg), this protein is Large ribosomal subunit protein bL19.